Consider the following 147-residue polypeptide: UPF0306 protein YPTB0506 (147 aa).

Belongs to the UPF0306 family.

In Yersinia pseudotuberculosis serotype I (strain IP32953), this protein is UPF0306 protein YPTB0506.